A 98-amino-acid polypeptide reads, in one-letter code: DNA-binding protein Fis (98 aa).

Residues 74 to 93 (QTRAATMMGINRGTLRKKLK) constitute a DNA-binding region (H-T-H motif).

It belongs to the transcriptional regulatory Fis family. Homodimer.

Activates ribosomal RNA transcription. Plays a direct role in upstream activation of rRNA promoters. The sequence is that of DNA-binding protein Fis from Photobacterium profundum (strain SS9).